Consider the following 460-residue polypeptide: Baeyer-Villiger oxidase AgnL3 (460 aa).

It belongs to the questin oxidase family. The cofactor is NADPH.

Its pathway is secondary metabolite biosynthesis. Functionally, baeyer-Villiger oxidase; part of the gene cluster that mediates the biosynthesis of agnestins, dihydroxy-xanthone metabolites. The pathway begins with the assembly and cyclization of atrochrysone thioester by the non-reducing polyketide synthase Agnpks1. The atrochrysone carboxyl ACP thioesterase AgnL7 then breaks the thioester bond and releases the atrochrysone carboxylic acid as the first enzyme-free intermediate. The decarboxylase AgnL1 then catalyzes the concerted decarboxylation-elimination required to convert atochrysone carboxylic acid into emodin anthrone, which is further oxidized to emodin by the anthrone oxygenase AgnL2. Emodin then undergoes reduction catalyzed by the oxidoreductase AgnL4 to yield the dihydroquinone tautomer which is the substrate for reduction by the short chain dehydrogenase AgnL6 reduction to produce hydroxyketone, followed by AgnL8 dehydration and likely spontaneous autoxidation to chrysophanol. Baeyer-Villiger oxidation by the oxidase AgnL3 leads to monodictyphenone via cleavage of the C-10/C-10a bond of chrysophanol. Alternative cleavage at the C-4a/C-10 bond of chrysophanol also leads to the formation some cephalone F. Further conversion to agnestins A and B, requires reduction to dihydro-monodictyphenone, oxidation to agnestin C probably via an epoxide, and rearrangement to either agnestin A or agnestin B directly, although agnestin A or agnestin B can also interconvert. Within the cluster, AgnR1 is the only unassigned oxidoreductase present which could be involved in this conversion. However, AgnR1 seems not to be involved in this step, and thus genes involved in the proposed oxidation/reduction may be located elsewhere on the genome. Further agnestin A derivatives are probably formed by spontaneous decarboxylations, dehydrations and methanolysis reactions. The sequence is that of Baeyer-Villiger oxidase AgnL3 from Paecilomyces divaricatus (Penicillium divaricatum).